A 338-amino-acid polypeptide reads, in one-letter code: Lipopolysaccharide 1,2-glucosyltransferase (338 aa).

UDP-binding positions include 33–38 and 130–131; these read GVDANY and DA. Asp130 and Asp132 together coordinate Mg(2+). 2 short sequence motifs (DXD) span residues 130–132 and 215–217; these read DAD and DQD. Position 264 (His264) interacts with Mg(2+). 264–270 is a UDP binding site; the sequence is HYTGATK.

Belongs to the glycosyltransferase 8 family. Requires Mg(2+) as cofactor.

Its subcellular location is the cell inner membrane. The enzyme catalyses UDP-glucose + [lipopolysaccharide] = UDP + D-glucosyl-[lipopolysaccharide].. The catalysed reaction is alpha-D-Glc-(1-&gt;3)-[alpha-D-Gal-(1-&gt;6)]-alpha-D-Glc-(1-&gt;3)-[L-alpha-D-Hep-(1-&gt;7)]-4-O-PO3(2-)-L-alpha-D-Hep-(1-&gt;3)-4-O-PO3(2-)-L-alpha-D-Hep-(1-&gt;5)-[alpha-Kdo-(2-&gt;4)]-alpha-Kdo-(2-&gt;6)-lipid A + UDP-alpha-D-glucose = alpha-D-Glc-(1-&gt;2)-alpha-D-Glc-(1-&gt;3)-[alpha-D-Gal-(1-&gt;6)]-alpha-D-Glc-(1-&gt;3)-[L-alpha-D-Hep-(1-&gt;7)]-4-O-PO3(2-)-L-alpha-D-Hep-(1-&gt;3)-4-O-PO3(2-)-L-alpha-D-Hep-(1-&gt;5)-[alpha-Kdo-(2-&gt;4)]-alpha-Kdo-(2-&gt;6)-lipid A + UDP + H(+). It participates in bacterial outer membrane biogenesis; LPS core biosynthesis. Functionally, glucosyltransferase involved in the biosynthesis of the core oligosaccharide region of lipopolysaccharide (LPS). Catalyzes the addition of a glucose (glucose III) to the outer-core glucose II. In Escherichia coli (strain K12), this protein is Lipopolysaccharide 1,2-glucosyltransferase.